The chain runs to 1907 residues: Receptor-type tyrosine-protein phosphatase F (1907 aa).

Residues 1-29 form the signal peptide; sequence MAPEPAPGRTMVPLVPALVMLGLVAGAHG. Topologically, residues 30 to 1263 are extracellular; the sequence is DSKPVFIKVP…QQQEEPEMLW (1234 aa). Ig-like C2-type domains follow at residues 33–123, 135–224, and 232–314; these read PVFI…AKLS, PSID…ANLY, and PRFS…AQVT. C54 and C107 are oxidised to a cystine. Heparin is bound at residue 68 to 77; that stretch reads KKGKKVSSQR. N117 carries an N-linked (GlcNAc...) asparagine glycan. Residues C156 and C207 are joined by a disulfide bond. N-linked (GlcNAc...) asparagine glycosylation is found at N250 and N295. C253 and C298 are joined by a disulfide. Fibronectin type-III domains follow at residues 321–411, 416–510, 514–604, 609–706, 711–819, 820–914, 918–1010, and 1014–1098; these read PPID…TGEQ, PPRR…TQQG, QPAD…TAQS, PPQK…TDED, PPRK…TTGA, VPGR…PEDL, FPQN…TMPV, and FAKN…TAPD. The tract at residues 398-417 is disordered; the sequence is GPPSEAVRARTGEQAPSSPP. The interval 693 to 712 is disordered; that stretch reads GPESSPVLVRTDEDVPSGPP. N721 carries an N-linked (GlcNAc...) asparagine glycan. An N-linked (GlcNAc...) asparagine glycan is attached at N966. Residues 1264 to 1284 traverse the membrane as a helical segment; it reads VTGPVLAVILIILIVIAILLF. Residues 1285–1907 are Cytoplasmic-facing; the sequence is KRKRTHSPSS…YLGSFDHYAT (623 aa). Residue S1305 is modified to Phosphoserine. Tyrosine-protein phosphatase domains lie at 1352-1607 and 1639-1898; these read FSQE…LLEA and MELE…ALEY. Substrate is bound by residues D1516, 1548 to 1554, and Q1592; that span reads CSAGVGR. C1548 acts as the Phosphocysteine intermediate in catalysis. C1839 acts as the Phosphocysteine intermediate in catalysis.

This sequence belongs to the protein-tyrosine phosphatase family. Receptor class 2A subfamily. In terms of assembly, interacts with GRIP1. Interacts with PPFIA1, PPFIA2 and PPFIA3. Interacts with INSR.

Its subcellular location is the membrane. It catalyses the reaction O-phospho-L-tyrosyl-[protein] + H2O = L-tyrosyl-[protein] + phosphate. Functionally, possible cell adhesion receptor. It possesses an intrinsic protein tyrosine phosphatase activity (PTPase) and dephosphorylates EPHA2 regulating its activity. The first PTPase domain has enzymatic activity, while the second one seems to affect the substrate specificity of the first one. The polypeptide is Receptor-type tyrosine-protein phosphatase F (PTPRF) (Homo sapiens (Human)).